Consider the following 90-residue polypeptide: N(2)-fixation sustaining protein CowN (90 aa).

It belongs to the CowN family.

In terms of biological role, is required to sustain N(2)-dependent growth in the presence of low levels of carbon monoxide (CO). Probably acts by protecting the N(2) fixation ability of the nitrogenase complex, which is inactivated in the presence of CO. The protein is N(2)-fixation sustaining protein CowN of Halorhodospira halophila (strain DSM 244 / SL1) (Ectothiorhodospira halophila (strain DSM 244 / SL1)).